The sequence spans 343 residues: MEKVDIKNFTLQELEAYIAGQGKERFRAKQIFKWLYQQDAREFADMTNLSKDFRQELEKTAWISNLDAEAVEASADGTKKYLFRLADGNAVESVLIPDEDRTTLCISSQVGCAMGCEFCLTGTFKLTRNLTTAEIVNQVCAVKRQEPVRNIVFMGMGEPLANLKNVVGALKILTDPDGFQFSTRKVTVSTSGLVPEMAELGASVTVNLAVSLNATTDEVRDRIMPINRRYPLKELLAACKAFPLPSRRWITIEYVMIRGVNDSLDDAKRLVRLISNIPSKVNLIPFNEHDGCTFQAPTQDSIDKFHKFLLDKHVTVITRSSRGSDISAACGQLKGRLDKAVKD.

The active-site Proton acceptor is the glutamate 92. Residues 98–325 (DEDRTTLCIS…VITRSSRGSD (228 aa)) enclose the Radical SAM core domain. Cysteine 105 and cysteine 330 are joined by a disulfide. [4Fe-4S] cluster contacts are provided by cysteine 112, cysteine 116, and cysteine 119. Residues 157–158 (GE), serine 189, 211–213 (SLN), and asparagine 287 contribute to the S-adenosyl-L-methionine site. Cysteine 330 serves as the catalytic S-methylcysteine intermediate.

Belongs to the radical SAM superfamily. RlmN family. [4Fe-4S] cluster is required as a cofactor.

It is found in the cytoplasm. It carries out the reaction adenosine(2503) in 23S rRNA + 2 reduced [2Fe-2S]-[ferredoxin] + 2 S-adenosyl-L-methionine = 2-methyladenosine(2503) in 23S rRNA + 5'-deoxyadenosine + L-methionine + 2 oxidized [2Fe-2S]-[ferredoxin] + S-adenosyl-L-homocysteine. It catalyses the reaction adenosine(37) in tRNA + 2 reduced [2Fe-2S]-[ferredoxin] + 2 S-adenosyl-L-methionine = 2-methyladenosine(37) in tRNA + 5'-deoxyadenosine + L-methionine + 2 oxidized [2Fe-2S]-[ferredoxin] + S-adenosyl-L-homocysteine. Functionally, specifically methylates position 2 of adenine 2503 in 23S rRNA and position 2 of adenine 37 in tRNAs. m2A2503 modification seems to play a crucial role in the proofreading step occurring at the peptidyl transferase center and thus would serve to optimize ribosomal fidelity. The sequence is that of Dual-specificity RNA methyltransferase RlmN from Geotalea uraniireducens (strain Rf4) (Geobacter uraniireducens).